The primary structure comprises 274 residues: Orotidine 5'-phosphate decarboxylase (274 aa).

Residues D40, 62–64 (KTH), 93–102 (DRKFVDIGNT), Y227, and R245 each bind substrate. K95 (proton donor) is an active-site residue.

The protein belongs to the OMP decarboxylase family.

The catalysed reaction is orotidine 5'-phosphate + H(+) = UMP + CO2. It functions in the pathway pyrimidine metabolism; UMP biosynthesis via de novo pathway; UMP from orotate: step 2/2. The protein is Orotidine 5'-phosphate decarboxylase (URA3) of Coccidioides posadasii (strain RMSCC 757 / Silveira) (Valley fever fungus).